We begin with the raw amino-acid sequence, 82 residues long: Exodeoxyribonuclease 7 small subunit (82 aa).

Belongs to the XseB family. Heterooligomer composed of large and small subunits.

The protein localises to the cytoplasm. It catalyses the reaction Exonucleolytic cleavage in either 5'- to 3'- or 3'- to 5'-direction to yield nucleoside 5'-phosphates.. In terms of biological role, bidirectionally degrades single-stranded DNA into large acid-insoluble oligonucleotides, which are then degraded further into small acid-soluble oligonucleotides. The sequence is that of Exodeoxyribonuclease 7 small subunit from Pectobacterium carotovorum subsp. carotovorum (strain PC1).